Here is a 52-residue protein sequence, read N- to C-terminus: MKAVGRGATPLGGWEAALAAGWGSRRGGTPLRRPIILRGTLGRFAAFFDTRL.

This is an uncharacterized protein from Escherichia coli.